Reading from the N-terminus, the 129-residue chain is Antileukoproteinase (129 aa).

The first 22 residues, 1-22 (GRGLLPFVLLALGIXAPWAVEG), serve as a signal peptide directing secretion. WAP domains are found at residues 25–73 (NALK…LNPV) and 79–127 (VKVK…LTPV). Cystine bridges form between Cys32-Cys61, Cys40-Cys65, Cys48-Cys60, Cys54-Cys69, Cys86-Cys115, Cys93-Cys119, Cys102-Cys114, and Cys108-Cys123. Residues 81-129 (VKPGKCPVVYGQCMMLNPPNHCKTDSQCLGDLKCCKSMCGKVCLTPVKA) are elastase inhibitory domain.

As to quaternary structure, interacts with GRN; interaction protects progranulin from proteolysis. In terms of tissue distribution, found in pregnant endometrium and myometrium, placenta, allantoic fluids, fetal cord blood, and fetal liver. Also found in uterus and lung.

It localises to the secreted. Functionally, acid-stable proteinase inhibitor with strong affinities for trypsin, chymotrypsin, elastase, and cathepsin G. Modulates the inflammatory and immune responses after bacterial infection, and after infection by the intracellular parasite L.major. Down-regulates responses to bacterial lipopolysaccharide (LPS). Plays a role in regulating the activation of NF-kappa-B and inflammatory responses. Has antimicrobial activity against mycobacteria, but not against salmonella. Contributes to normal resistance against infection by M.tuberculosis. Required for normal resistance to infection by L.major. Required for normal wound healing, probably by preventing tissue damage by limiting protease activity. Together with ELANE, required for normal differentiation and proliferation of bone marrow myeloid cells. This chain is Antileukoproteinase (SLPI), found in Sus scrofa (Pig).